A 419-amino-acid polypeptide reads, in one-letter code: Probable G-protein coupled receptor 63 (419 aa).

Residues 1–81 (MVFSAVLTAF…AFKSLNLPLQ (81 aa)) are Extracellular-facing. 3 N-linked (GlcNAc...) asparagine glycosylation sites follow: N16, N28, and N62. A helical membrane pass occupies residues 82 to 104 (ITLSAIMIFILFVSFLGNLVVCL). Topologically, residues 105 to 115 (MVYQKAAMRSA) are cytoplasmic. Residues 116 to 138 (INILLASLAFADMLLAVLNMPFA) form a helical membrane-spanning segment. Over 139–157 (LVTILTTRWIFGKFFCRVS) the chain is Extracellular. The chain crosses the membrane as a helical span at residues 158 to 177 (AMFFWLFVIEGVAILLIISI). Residues 178–196 (DRFLIIVQRQDKLNPYRAK) lie on the Cytoplasmic side of the membrane. Residues 197-216 (VLIAVSWATSFCVAFPLAVG) traverse the membrane as a helical segment. Over 217–240 (NPDLQIPSRAPQCVFGYTTNPGYQ) the chain is Extracellular. Residues 241–263 (AYVILISLISFFIPFLVILYSFM) traverse the membrane as a helical segment. Topologically, residues 264–315 (GILNTLRHNALRIHSYPEGICLSQASKLGLMSLQRPFQMSIDMGFKTRAFTT) are cytoplasmic. A helical membrane pass occupies residues 316–338 (ILILFAVFIVCWAPFTTYSLVAT). Residues 339–352 (FSKHFYYQHNFFEI) lie on the Extracellular side of the membrane. The chain crosses the membrane as a helical span at residues 353–375 (STWLLWLCYLKSALNPLIYYWRI). The Cytoplasmic portion of the chain corresponds to 376-419 (KKFHDACLDMMPKSFKFLPQLPGHTKRRIRPSAVYVCGEHRTVV).

Belongs to the G-protein coupled receptor 1 family. As to expression, expressed in brain; detected in the frontal cortex, with lower levels in the thalamus, caudate, hypothalamus and midbrain.

Its subcellular location is the cell membrane. Functionally, orphan receptor. May play a role in brain function. In Homo sapiens (Human), this protein is Probable G-protein coupled receptor 63 (GPR63).